The primary structure comprises 309 residues: Acetolactate synthase small subunit, mitochondrial (309 aa).

A mitochondrion-targeting transit peptide spans 1-24 (MLRSLLQSGHRRVVASSCATMVRC). Positions 79–159 (VLNCLVQNEP…DYTNSEIIKR (81 aa)) constitute an ACT domain.

The protein belongs to the acetolactate synthase small subunit family. The acetolactate synthase complex contains the catalytic regulatory subunit ILV2 and the regulatory small subunit ILV6.

The protein resides in the mitochondrion. It functions in the pathway amino-acid biosynthesis; L-isoleucine biosynthesis; L-isoleucine from 2-oxobutanoate: step 1/4. Its pathway is amino-acid biosynthesis; L-valine biosynthesis; L-valine from pyruvate: step 1/4. Regulatory subunit of mitochondrial acetolactate synthase, which catalyzes the first of a series of common steps in the biosynthesis of the branched-chain amino acids. Stimulates activity of the acetolactate synthase catalytic subunit ILV2 seven- to tenfold and confers sensitivity to inhibition by valine and activation by ATP. The chain is Acetolactate synthase small subunit, mitochondrial (ILV6) from Saccharomyces cerevisiae (strain ATCC 204508 / S288c) (Baker's yeast).